Here is a 262-residue protein sequence, read N- to C-terminus: Acyl-[acyl-carrier-protein]--UDP-N-acetylglucosamine O-acyltransferase (262 aa).

It belongs to the transferase hexapeptide repeat family. LpxA subfamily. Homotrimer.

The protein resides in the cytoplasm. The enzyme catalyses a (3R)-hydroxyacyl-[ACP] + UDP-N-acetyl-alpha-D-glucosamine = a UDP-3-O-[(3R)-3-hydroxyacyl]-N-acetyl-alpha-D-glucosamine + holo-[ACP]. Its pathway is glycolipid biosynthesis; lipid IV(A) biosynthesis; lipid IV(A) from (3R)-3-hydroxytetradecanoyl-[acyl-carrier-protein] and UDP-N-acetyl-alpha-D-glucosamine: step 1/6. Its function is as follows. Involved in the biosynthesis of lipid A, a phosphorylated glycolipid that anchors the lipopolysaccharide to the outer membrane of the cell. The protein is Acyl-[acyl-carrier-protein]--UDP-N-acetylglucosamine O-acyltransferase of Salmonella dublin (strain CT_02021853).